The primary structure comprises 818 residues: Sorting nexin-29 (818 aa).

An RUN domain is found at 36–180 (SDSDSRVTCL…ILFAINIDNK (145 aa)). The disordered stretch occupies residues 267 to 299 (VSFDDDEEEQGTGDTLKKMPGTAESSEENSDRS). Phosphoserine occurs at positions 268, 291, 292, 330, 344, 447, and 452. Disordered regions lie at residues 343–375 (KSID…PDRT) and 441–462 (RYRE…PSAS). A compositionally biased stretch (low complexity) spans 445-462 (ASSPGQGSPLSSLLPSAS). Residues 467 to 547 (MTVHELRQAI…VLKVQLKKYV (81 aa)) adopt a coiled-coil conformation. Position 642 is a phosphoserine (S642). Residue T644 is modified to Phosphothreonine. Phosphoserine is present on residues S645 and S649. A PX domain is found at 659 to 782 (ALINVWIPSV…PFFVDITPPG (124 aa)). The disordered stretch occupies residues 781–818 (PGEPLNKSSRPKAVSRFPKLSRGHPREVRNVEPQSGDL).

This sequence belongs to the sorting nexin family.

The polypeptide is Sorting nexin-29 (Snx29) (Mus musculus (Mouse)).